We begin with the raw amino-acid sequence, 250 residues long: Probable phosphatase VIBHAR_04983 (250 aa).

9 residues coordinate Zn(2+): H8, H10, H16, H41, E74, H102, H132, D194, and H196.

The protein belongs to the PHP family. The cofactor is Zn(2+).

The sequence is that of Probable phosphatase VIBHAR_04983 from Vibrio campbellii (strain ATCC BAA-1116).